Here is a 119-residue protein sequence, read N- to C-terminus: Fluoride-specific ion channel FluC (119 aa).

4 helical membrane-spanning segments follow: residues 5-25 (IIPL…LNLA), 30-50 (IPPA…IGIF), 59-79 (WKLL…GFSL), and 97-117 (IFLH…IGAA). G69 and T72 together coordinate Na(+).

Belongs to the fluoride channel Fluc/FEX (TC 1.A.43) family.

The protein resides in the cell inner membrane. The enzyme catalyses fluoride(in) = fluoride(out). Na(+) is not transported, but it plays an essential structural role and its presence is essential for fluoride channel function. Its function is as follows. Fluoride-specific ion channel. Important for reducing fluoride concentration in the cell, thus reducing its toxicity. This is Fluoride-specific ion channel FluC from Neisseria meningitidis serogroup B (strain ATCC BAA-335 / MC58).